We begin with the raw amino-acid sequence, 134 residues long: Methylmalonyl-CoA decarboxylase subunit gamma (134 aa).

Over residues 28 to 38 (APAARPAAAPA) the composition is skewed to low complexity. Positions 28–67 (APAARPAAAPAPAAPKPAAAPAPAPAPKTTAAGAGAGANT) are disordered. Pro residues predominate over residues 39–53 (PAAPKPAAAPAPAPA). Over residues 54 to 67 (PKTTAAGAGAGANT) the composition is skewed to low complexity. The 77-residue stretch at 58–134 (AAGAGAGANT…NAGDILVVLS (77 aa)) folds into the Biotinyl-binding domain. Lys100 bears the N6-biotinyllysine mark.

In terms of assembly, the methylmalonyl-CoA decarboxylase is composed of four subunits: the carboxyltransferase alpha subunit (MmdA), the tunnel beta subunit (MmdB), the biotin-containing gamma subunit (MmdC) and the delta subunit (MmdD). Biotin serves as cofactor.

It localises to the cell membrane. It carries out the reaction (S)-methylmalonyl-CoA + Na(+)(in) + H(+)(out) = propanoyl-CoA + Na(+)(out) + CO2. Its function is as follows. Biotin-containing subunit of the sodium ion pump methylmalonyl-CoA decarboxylase, which converts the chemical energy of a decarboxylation reaction into an electrochemical gradient of Na(+) ions across the cytoplasmic membrane, thereby creating a sodium ion motive force that is used for ATP synthesis. The chain is Methylmalonyl-CoA decarboxylase subunit gamma from Propionigenium modestum.